The following is a 276-amino-acid chain: Adenylate kinase (276 aa).

50-55 (GAGKGT) serves as a coordination point for ATP. Positions 70-99 (ATGDMLRSQVAKKTPLGREAKKIMDQGGLV) are NMP. Residues Thr-71, Arg-76, 97–99 (GLV), 126–129 (GFPR), and Gln-133 contribute to the AMP site. An LID region spans residues 167-204 (GRLVHPASGRSYHTTFNPPKKAMTDDVTGEPLIQRSDD). ATP-binding positions include Arg-168 and 177-178 (SY). Residues Arg-201 and Arg-212 each coordinate AMP. Gln-240 serves as a coordination point for ATP.

It belongs to the adenylate kinase family. AK2 subfamily. Monomer.

Its subcellular location is the cytoplasm. The protein localises to the cytosol. The protein resides in the mitochondrion intermembrane space. The catalysed reaction is AMP + ATP = 2 ADP. Catalyzes the reversible transfer of the terminal phosphate group between ATP and AMP. Plays an important role in cellular energy homeostasis and in adenine nucleotide metabolism. Adenylate kinase activity is critical for regulation of the phosphate utilization and the AMP de novo biosynthesis pathways. The protein is Adenylate kinase of Pyricularia oryzae (strain 70-15 / ATCC MYA-4617 / FGSC 8958) (Rice blast fungus).